Here is a 1720-residue protein sequence, read N- to C-terminus: TOG array regulator of axonemal microtubules protein 1 (1720 aa).

TOG regions lie at residues 94–312 (EEDT…RRLE) and 352–596 (PQEL…MPSS). 8 HEAT repeats span residues 175-212 (AFSLALLPQLVVSLREENPALRKDALQILHICLKRSPG), 214-247 (VLRTLIQQGLESTDARLRASTALLLPILLTTEDL), 251-289 (LDLTEVIISLARKLGDQETEEESETAFSALQQIGERLGQ), 345-384 (NLKFGIIPQELHSRLLDQEDYKNRTQAVEELKQVLGKFNP), 390-427 (SSLVGFISLLYNLLDDSNFKVVHGTLEVLHLLVIRLGE), 431-466 (QFLGPVIAASVKVLADNKLVIKQEYMKIFLKLMKEV), 467-504 (GPQQVLCLLLEHLKHKHSRVREEVVNICICSLLTYPSE), and 506-543 (FDLPKLSFDLAPALVDSKRRVRQAALEAFAVLASSMGS). 4 stretches are compositionally biased toward polar residues: residues 794–809 (FGSQTECTSSNGQNPS), 819–829 (PVSSPRTSPKH), 842–852 (DNSVNFSNSWP), and 868–877 (LVSQKSSDPT). Disordered regions lie at residues 794–924 (FGSQ…SLLP), 970–998 (HSSLRSLRNSAAKKRAKLSGSTSDLESPD), and 1067–1087 (KKISHIAEQSPSAGSSSNPQQ). Positions 1073–1087 (AEQSPSAGSSSNPQQ) are enriched in polar residues. The interval 1256 to 1425 (EIALTEALRL…YIKDSVRNLQ (170 aa)) is TOG 3. HEAT repeat units lie at residues 1294–1331 (TKLHETNFAVVQEVKNLRSGVSRAAVVCLSDLFTYLKK) and 1335–1372 (QELDTTVKVLLHKAGESNTFIREDVDKALRAMVNNVTP). Residues 1430 to 1462 (GEIPLDTPSAKGRRSHTGSVGNTRSSSVSRDAF) are disordered. The span at 1446–1458 (TGSVGNTRSSSVS) shows a compositional bias: polar residues. The TOG 4 stretch occupies residues 1484–1720 (SLESAEYLKL…LLDMTILNEL (237 aa)). HEAT repeat units follow at residues 1485 to 1522 (LESAEYLKLITGLLNAKDFRDRINGIKQLLSDTENNQD), 1526 to 1563 (GNIVKIFDAFKSRLHDSNSKVNLVALETMHKMIPLLRD), and 1567 to 1605 (PIINMLIPAIVDNNLNSKNPGIYAAATNVVQALSQHVDN).

It belongs to the Crescerin family. Interacts with ARMC9, CCDC66, CEP104 and CSPP1.

Its subcellular location is the cell projection. It localises to the cilium. The protein localises to the cytoplasm. The protein resides in the cytoskeleton. It is found in the cilium axoneme. In terms of biological role, involved in ciliogenesis. It is required for appropriate acetylation and polyglutamylation of ciliary microtubules, and regulation of cilium length. Interacts with microtubules and promotes microtubule polymerization via its HEAT repeat domains, especially those in TOG region 2 and 4. In Homo sapiens (Human), this protein is TOG array regulator of axonemal microtubules protein 1.